Here is a 403-residue protein sequence, read N- to C-terminus: Argininosuccinate synthase 1 (403 aa).

Residues 10-18 (SYSGGLDTS) and A37 contribute to the ATP site. L-citrulline is bound by residues Y88 and S93. G118 serves as a coordination point for ATP. The L-aspartate site is built by T120, N124, and D125. N124 provides a ligand contact to L-citrulline. L-citrulline contacts are provided by R128, S179, S188, E264, and Y276.

The protein belongs to the argininosuccinate synthase family. Type 1 subfamily. As to quaternary structure, homotetramer.

The protein resides in the cytoplasm. The catalysed reaction is L-citrulline + L-aspartate + ATP = 2-(N(omega)-L-arginino)succinate + AMP + diphosphate + H(+). It participates in amino-acid biosynthesis; L-arginine biosynthesis; L-arginine from L-ornithine and carbamoyl phosphate: step 2/3. The chain is Argininosuccinate synthase 1 from Rhizobium johnstonii (strain DSM 114642 / LMG 32736 / 3841) (Rhizobium leguminosarum bv. viciae).